We begin with the raw amino-acid sequence, 340 residues long: tRNA N6-adenosine threonylcarbamoyltransferase (340 aa).

Residues histidine 111 and histidine 115 each contribute to the Fe cation site. Substrate contacts are provided by residues 133–137 (VVSGG), aspartate 166, glycine 179, aspartate 183, and asparagine 273. Aspartate 301 is a binding site for Fe cation.

It belongs to the KAE1 / TsaD family. Requires Fe(2+) as cofactor.

Its subcellular location is the cytoplasm. It catalyses the reaction L-threonylcarbamoyladenylate + adenosine(37) in tRNA = N(6)-L-threonylcarbamoyladenosine(37) in tRNA + AMP + H(+). Required for the formation of a threonylcarbamoyl group on adenosine at position 37 (t(6)A37) in tRNAs that read codons beginning with adenine. Is involved in the transfer of the threonylcarbamoyl moiety of threonylcarbamoyl-AMP (TC-AMP) to the N6 group of A37, together with TsaE and TsaB. TsaD likely plays a direct catalytic role in this reaction. The sequence is that of tRNA N6-adenosine threonylcarbamoyltransferase from Pelobacter propionicus (strain DSM 2379 / NBRC 103807 / OttBd1).